A 535-amino-acid chain; its full sequence is Peptide chain release factor 3 (535 aa).

Positions 8–278 (ARRRTFAIIS…VDQAPAPGPR (271 aa)) constitute a tr-type G domain. Residues 17–24 (SHPDAGKT), 85–89 (DTPGH), and 139–142 (NKLD) each bind GTP.

Belongs to the TRAFAC class translation factor GTPase superfamily. Classic translation factor GTPase family. PrfC subfamily.

It localises to the cytoplasm. In terms of biological role, increases the formation of ribosomal termination complexes and stimulates activities of RF-1 and RF-2. It binds guanine nucleotides and has strong preference for UGA stop codons. It may interact directly with the ribosome. The stimulation of RF-1 and RF-2 is significantly reduced by GTP and GDP, but not by GMP. The chain is Peptide chain release factor 3 from Bordetella bronchiseptica (strain ATCC BAA-588 / NCTC 13252 / RB50) (Alcaligenes bronchisepticus).